The following is a 658-amino-acid chain: Alkyldihydroxyacetonephosphate synthase, peroxisomal (658 aa).

Residues 1–24 are compositionally biased toward low complexity; that stretch reads MAEAAAAAAAAAAAGETSASSGSA. The segment at 1-37 is disordered; that stretch reads MAEAAAAAAAAAAAGETSASSGSAAERDPDQDRAGRR. The transit peptide at 1-58 directs the protein to the peroxisome; sequence MAEAAAAAAAAAAAGETSASSGSAAERDPDQDRAGRRLRVLSGHLLGRPQEALSTNEC. The span at 25-35 shows a compositional bias: basic and acidic residues; the sequence is AERDPDQDRAG. A Phosphoserine modification is found at S65. The residue at position 74 (T74) is a Phosphothreonine. At K102 the chain carries N6-acetyllysine. An FAD-binding PCMH-type domain is found at 202–384; that stretch reads FERIPDIVLW…TEATIKIRPT (183 aa). FAD contacts are provided by residues 234–240, 303–309, and 316–319; these read PIGGGTS, DSLEFST, and TRAS. N6-acetyllysine is present on K347. 368 to 374 contacts FAD; the sequence is EGTLGVI. R515 lines the substrate pocket. Catalysis depends on Y578, which acts as the Proton donor/acceptor. Important for enzyme activity stretches follow at residues 615–617 and 654–658; these read HHH and NRNLL.

The protein belongs to the FAD-binding oxidoreductase/transferase type 4 family. As to quaternary structure, homodimer. It depends on FAD as a cofactor.

The protein localises to the peroxisome membrane. The protein resides in the peroxisome. The catalysed reaction is a long chain fatty alcohol + a 1-acylglycerone 3-phosphate = a 1-O-alkylglycerone 3-phosphate + a long-chain fatty acid + H(+). It carries out the reaction hexadecan-1-ol + 1-hexadecanoylglycerone 3-phosphate = 1-O-hexadecylglycerone 3-phosphate + hexadecanoate + H(+). It catalyses the reaction 1-hexadecanoylglycerone 3-phosphate + a long-chain fatty acid = a 1-acylglycerone 3-phosphate + hexadecanoate. It functions in the pathway glycerolipid metabolism; ether lipid biosynthesis. With respect to regulation, inhibited by N-ethylmaleimide, p-bromophenacylbromide, 2,4- dinitrofluorobenzene and divalent cations such as such as Mn(2+), Mg(2+) and Zn(2+). Inhibition by p-bromophenacylbromide is strongly pH dependent and is highest at alkaline conditions. Its function is as follows. Catalyzes the exchange of the acyl chain in acyl-dihydroxyacetonephosphate (acyl-DHAP) for a long chain fatty alcohol, yielding the first ether linked intermediate, i.e. alkyl-dihydroxyacetonephosphate (alkyl-DHAP), in the pathway of ether lipid biosynthesis. This chain is Alkyldihydroxyacetonephosphate synthase, peroxisomal (AGPS), found in Cavia porcellus (Guinea pig).